We begin with the raw amino-acid sequence, 412 residues long: Tyrosine--tRNA ligase (412 aa).

A 'HIGH' region motif is present at residues 50–59 (PTGTDIHLGH). Positions 244–248 (KMSKS) match the 'KMSKS' region motif. Residue lysine 247 coordinates ATP. The 64-residue stretch at 348-411 (VKFFYLLSSL…IGKKIIKRFE (64 aa)) folds into the S4 RNA-binding domain.

This sequence belongs to the class-I aminoacyl-tRNA synthetase family. TyrS type 2 subfamily. In terms of assembly, homodimer.

The protein resides in the cytoplasm. The catalysed reaction is tRNA(Tyr) + L-tyrosine + ATP = L-tyrosyl-tRNA(Tyr) + AMP + diphosphate + H(+). Its function is as follows. Catalyzes the attachment of tyrosine to tRNA(Tyr) in a two-step reaction: tyrosine is first activated by ATP to form Tyr-AMP and then transferred to the acceptor end of tRNA(Tyr). In Prochlorococcus marinus (strain MIT 9312), this protein is Tyrosine--tRNA ligase.